The following is a 338-amino-acid chain: Protein-glutamate methylesterase/protein-glutamine glutaminase 2 (338 aa).

A Response regulatory domain is found at 2–119 (RIGIVNDSAL…SDTKLAAGPL (118 aa)). At Asp53 the chain carries 4-aspartylphosphate. The CheB-type methylesterase domain occupies 145 to 330 (PTPTAPRLVA…PLQKIAPRLV (186 aa)). Residues Ser158, His185, and Asp278 contribute to the active site.

It belongs to the CheB family. Phosphorylated by CheA. Phosphorylation of the N-terminal regulatory domain activates the methylesterase activity.

The protein localises to the cytoplasm. It catalyses the reaction [protein]-L-glutamate 5-O-methyl ester + H2O = L-glutamyl-[protein] + methanol + H(+). The enzyme catalyses L-glutaminyl-[protein] + H2O = L-glutamyl-[protein] + NH4(+). Its function is as follows. Involved in chemotaxis. Part of a chemotaxis signal transduction system that modulates chemotaxis in response to various stimuli. Catalyzes the demethylation of specific methylglutamate residues introduced into the chemoreceptors (methyl-accepting chemotaxis proteins or MCP) by CheR. Also mediates the irreversible deamidation of specific glutamine residues to glutamic acid. The chain is Protein-glutamate methylesterase/protein-glutamine glutaminase 2 from Cupriavidus metallidurans (strain ATCC 43123 / DSM 2839 / NBRC 102507 / CH34) (Ralstonia metallidurans).